We begin with the raw amino-acid sequence, 178 residues long: Protamine-like protein (178 aa).

Disordered regions lie at residues 1-27 and 77-178; these read PSTT…TVSD and SVVK…RAKK. Basic residues-rich tracts occupy residues 8-21 and 94-178; these read SPKR…RKRT and PRRR…RAKK. One can recognise an H15 domain in the interval 21-89; sequence TGPTVSDLIL…KAKGFYKLNK (69 aa).

Male germ cells.

The protein resides in the nucleus. The protein localises to the chromosome. Its function is as follows. Replaces histones in the chromatin of sperm during the haploid phase of spermatogenesis. Compacts sperm DNA into a highly condensed, stable and inactive complex. The sequence is that of Protamine-like protein from Mullus surmuletus (Striped red mullet).